Reading from the N-terminus, the 650-residue chain is Chaperone protein HtpG (650 aa).

An a; substrate-binding region spans residues 1 to 349 (MSKTVKKFET…SSDLPLNVSR (349 aa)). Positions 350 to 566 (EILQEDVQIK…EHGLNANMER (217 aa)) are b. Positions 567-650 (ILRAMNQTVP…VADGKAAAGE (84 aa)) are c.

Belongs to the heat shock protein 90 family. In terms of assembly, homodimer.

The protein resides in the cytoplasm. Molecular chaperone. Has ATPase activity. The protein is Chaperone protein HtpG of Geobacter sulfurreducens (strain ATCC 51573 / DSM 12127 / PCA).